Reading from the N-terminus, the 324-residue chain is Elongation factor Ts, mitochondrial (324 aa).

The N-terminal 44 residues, 1 to 44, are a transit peptide targeting the mitochondrion; sequence MSLLRSLRFFPVACTGRSARAVLLQPSQPWHTLHAGPSLSSSAS. N6-succinyllysine is present on residues K75 and K132. S269 bears the Phosphoserine mark.

It belongs to the EF-Ts family.

Its subcellular location is the mitochondrion. Its function is as follows. Associates with the EF-Tu.GDP complex and induces the exchange of GDP to GTP. It remains bound to the aminoacyl-tRNA.EF-Tu.GTP complex up to the GTP hydrolysis stage on the ribosome. This Rattus norvegicus (Rat) protein is Elongation factor Ts, mitochondrial (Tsfm).